Consider the following 340-residue polypeptide: Phosphoribosylformylglycinamidine cyclo-ligase (340 aa).

The protein belongs to the AIR synthase family.

The protein localises to the cytoplasm. It carries out the reaction 2-formamido-N(1)-(5-O-phospho-beta-D-ribosyl)acetamidine + ATP = 5-amino-1-(5-phospho-beta-D-ribosyl)imidazole + ADP + phosphate + H(+). It participates in purine metabolism; IMP biosynthesis via de novo pathway; 5-amino-1-(5-phospho-D-ribosyl)imidazole from N(2)-formyl-N(1)-(5-phospho-D-ribosyl)glycinamide: step 2/2. This is Phosphoribosylformylglycinamidine cyclo-ligase from Acetivibrio thermocellus (strain ATCC 27405 / DSM 1237 / JCM 9322 / NBRC 103400 / NCIMB 10682 / NRRL B-4536 / VPI 7372) (Clostridium thermocellum).